Reading from the N-terminus, the 137-residue chain is Large ribosomal subunit protein uL16 (137 aa).

Belongs to the universal ribosomal protein uL16 family. As to quaternary structure, part of the 50S ribosomal subunit.

Functionally, binds 23S rRNA and is also seen to make contacts with the A and possibly P site tRNAs. The protein is Large ribosomal subunit protein uL16 of Bartonella quintana (strain Toulouse) (Rochalimaea quintana).